Reading from the N-terminus, the 61-residue chain is Temporin-SN2 (61 aa).

A signal peptide spans 1–22 (MFTLKKTLLLLFFLGTINLSLC). Positions 23 to 44 (EEERNAEEERRDGDDEMDVEVK) are cleaved as a propeptide — removed in mature form. Residue K61 is modified to Lysine amide.

The protein belongs to the frog skin active peptide (FSAP) family. Temporin subfamily. Expressed by the skin glands.

It is found in the secreted. Functionally, antimicrobial peptide. Active against some Gram-positive and Gram-negative bacterial strains. Active against fungus C.glabrata 090902 but not against C.albicans ATCC 12231. Shows very weak hemolytic activity against human erythrocytes. The protein is Temporin-SN2 of Sylvirana spinulosa (Fine-spined frog).